Consider the following 334-residue polypeptide: N-acetyl-gamma-glutamyl-phosphate reductase (334 aa).

Residue C154 is part of the active site.

Belongs to the NAGSA dehydrogenase family. Type 1 subfamily.

It localises to the cytoplasm. It catalyses the reaction N-acetyl-L-glutamate 5-semialdehyde + phosphate + NADP(+) = N-acetyl-L-glutamyl 5-phosphate + NADPH + H(+). The protein operates within amino-acid biosynthesis; L-arginine biosynthesis; N(2)-acetyl-L-ornithine from L-glutamate: step 3/4. In terms of biological role, catalyzes the NADPH-dependent reduction of N-acetyl-5-glutamyl phosphate to yield N-acetyl-L-glutamate 5-semialdehyde. This Aliivibrio fischeri (strain ATCC 700601 / ES114) (Vibrio fischeri) protein is N-acetyl-gamma-glutamyl-phosphate reductase.